The chain runs to 73 residues: Translation initiation factor IF-1 (73 aa).

One can recognise an S1-like domain in the interval 1-73 (MAKKDGVIEI…TRGRIVYRYK (73 aa)).

Belongs to the IF-1 family. In terms of assembly, component of the 30S ribosomal translation pre-initiation complex which assembles on the 30S ribosome in the order IF-2 and IF-3, IF-1 and N-formylmethionyl-tRNA(fMet); mRNA recruitment can occur at any time during PIC assembly.

It localises to the cytoplasm. Its function is as follows. One of the essential components for the initiation of protein synthesis. Stabilizes the binding of IF-2 and IF-3 on the 30S subunit to which N-formylmethionyl-tRNA(fMet) subsequently binds. Helps modulate mRNA selection, yielding the 30S pre-initiation complex (PIC). Upon addition of the 50S ribosomal subunit IF-1, IF-2 and IF-3 are released leaving the mature 70S translation initiation complex. The polypeptide is Translation initiation factor IF-1 (Leifsonia xyli subsp. xyli (strain CTCB07)).